The following is a 390-amino-acid chain: Type II methyltransferase M.SacI (390 aa).

The region spanning 5 to 371 (LPVISLFSGA…RALMEQLGYL (367 aa)) is the SAM-dependent MTase C5-type domain. Cys96 is a catalytic residue.

It belongs to the class I-like SAM-binding methyltransferase superfamily. C5-methyltransferase family.

It carries out the reaction a 2'-deoxycytidine in DNA + S-adenosyl-L-methionine = a 5-methyl-2'-deoxycytidine in DNA + S-adenosyl-L-homocysteine + H(+). A beta methylase recognizes the double-stranded sequence 5'-GAGCTC-3', methylates C-4 on both strands, and protects the DNA from cleavage by the SacI endonuclease. The sequence is that of Type II methyltransferase M.SacI from Streptomyces achromogenes.